Here is a 321-residue protein sequence, read N- to C-terminus: Lipoyl synthase (321 aa).

The [4Fe-4S] cluster site is built by cysteine 68, cysteine 73, cysteine 79, cysteine 94, cysteine 98, cysteine 101, and serine 308. The Radical SAM core domain maps to 80–297; it reads FNHGTATFMI…KAAAMDMGFT (218 aa).

It belongs to the radical SAM superfamily. Lipoyl synthase family. [4Fe-4S] cluster is required as a cofactor.

It is found in the cytoplasm. The catalysed reaction is [[Fe-S] cluster scaffold protein carrying a second [4Fe-4S](2+) cluster] + N(6)-octanoyl-L-lysyl-[protein] + 2 oxidized [2Fe-2S]-[ferredoxin] + 2 S-adenosyl-L-methionine + 4 H(+) = [[Fe-S] cluster scaffold protein] + N(6)-[(R)-dihydrolipoyl]-L-lysyl-[protein] + 4 Fe(3+) + 2 hydrogen sulfide + 2 5'-deoxyadenosine + 2 L-methionine + 2 reduced [2Fe-2S]-[ferredoxin]. The protein operates within protein modification; protein lipoylation via endogenous pathway; protein N(6)-(lipoyl)lysine from octanoyl-[acyl-carrier-protein]: step 2/2. Functionally, catalyzes the radical-mediated insertion of two sulfur atoms into the C-6 and C-8 positions of the octanoyl moiety bound to the lipoyl domains of lipoate-dependent enzymes, thereby converting the octanoylated domains into lipoylated derivatives. This is Lipoyl synthase from Erwinia tasmaniensis (strain DSM 17950 / CFBP 7177 / CIP 109463 / NCPPB 4357 / Et1/99).